The chain runs to 514 residues: 2,3-bisphosphoglycerate-independent phosphoglycerate mutase (514 aa).

Mn(2+) contacts are provided by Asp14 and Ser64. Residue Ser64 is the Phosphoserine intermediate of the active site. Substrate is bound by residues His125, 155 to 156, Arg187, Arg193, 263 to 266, and Lys336; these read RD and RADR. Mn(2+) contacts are provided by Asp403, His407, Asp444, His445, and His463.

The protein belongs to the BPG-independent phosphoglycerate mutase family. As to quaternary structure, monomer. Mn(2+) serves as cofactor.

It catalyses the reaction (2R)-2-phosphoglycerate = (2R)-3-phosphoglycerate. It participates in carbohydrate degradation; glycolysis; pyruvate from D-glyceraldehyde 3-phosphate: step 3/5. Functionally, catalyzes the interconversion of 2-phosphoglycerate and 3-phosphoglycerate. The chain is 2,3-bisphosphoglycerate-independent phosphoglycerate mutase from Shewanella sp. (strain W3-18-1).